The primary structure comprises 619 residues: DEAD-box ATP-dependent RNA helicase 14 (619 aa).

An N-acetylalanine modification is found at Ala-2. In terms of domain architecture, WW spans 17–51 (HTLPKPWKGLIDDRTGYLYFWNPETNVTQYEKPTP). The tract at residues 47–139 (EKPTPSLPPK…APASELSPEA (93 aa)) is disordered. The span at 61 to 71 (VSVSSSVQVQQ) shows a compositional bias: low complexity. A compositionally biased stretch (basic and acidic residues) spans 78–93 (PKDDDKYSRGSERVSR). Positions 125–139 (PLPSSAPASELSPEA) are enriched in low complexity. Ser-136 carries the phosphoserine modification. Residues 158–186 (MSFEATGFPPELLREVLSAGFSAPTPIQA) carry the Q motif motif. The region spanning 189–363 (WPIAMQGRDI…ADLLVNPAQV (175 aa)) is the Helicase ATP-binding domain. Position 202–209 (202–209 (AKTGSGKT)) interacts with ATP. Positions 311-314 (DEAD) match the DEAD box motif. Residues 392–536 (RLEQILRSQE…RVPPQIREMA (145 aa)) enclose the Helicase C-terminal domain. The disordered stretch occupies residues 528–619 (VPPQIREMAT…FHETMMMKHR (92 aa)). Positions 552–568 (PSGGRGRGGDSGYGGRG) are enriched in gly residues. Basic and acidic residues-rich tracts occupy residues 582 to 595 (GRER…ERFN) and 609 to 619 (SFHETMMMKHR).

This sequence belongs to the DEAD box helicase family. DDX5/DBP2 subfamily. As to expression, ubiquitous. Preferentially expressed in flowers and roots.

The protein localises to the nucleus. The catalysed reaction is ATP + H2O = ADP + phosphate + H(+). Functionally, ATP-dependent RNA helicase involved nonsense-mediated mRNA decay and ribosome biogenesis through rRNA processing. The polypeptide is DEAD-box ATP-dependent RNA helicase 14 (RH14) (Arabidopsis thaliana (Mouse-ear cress)).